We begin with the raw amino-acid sequence, 70 residues long: MPGIKLTPRDSFDDAYRKFKRQSDRNLIVTEARARQHYETKTEKRKKEKIATRKKILKKLFMLRRYESRL.

The protein belongs to the bacterial ribosomal protein bS21 family.

The sequence is that of Small ribosomal subunit protein bS21 from Sulfurovum sp. (strain NBC37-1).